The chain runs to 1385 residues: DNA-directed RNA polymerase subunit beta' (1385 aa).

Zn(2+) contacts are provided by Cys72, Cys74, Cys87, and Cys90. Residues Asp463, Asp465, and Asp467 each contribute to the Mg(2+) site. Zn(2+)-binding residues include Cys813, Cys887, Cys894, and Cys897.

This sequence belongs to the RNA polymerase beta' chain family. In terms of assembly, the RNAP catalytic core consists of 2 alpha, 1 beta, 1 beta' and 1 omega subunit. When a sigma factor is associated with the core the holoenzyme is formed, which can initiate transcription. Requires Mg(2+) as cofactor. It depends on Zn(2+) as a cofactor.

The catalysed reaction is RNA(n) + a ribonucleoside 5'-triphosphate = RNA(n+1) + diphosphate. Its function is as follows. DNA-dependent RNA polymerase catalyzes the transcription of DNA into RNA using the four ribonucleoside triphosphates as substrates. This chain is DNA-directed RNA polymerase subunit beta', found in Trichlorobacter lovleyi (strain ATCC BAA-1151 / DSM 17278 / SZ) (Geobacter lovleyi).